Consider the following 125-residue polypeptide: MPTINQLVRKGREKVKKKSKAPALEGNPQKRGVCVRVYTTTPKKPNSALRKVARVRLSNGYEVTCYIPGIGHNLQEHSIVLVRGGRVKDLPGVRYKIIRGALDAAGVKDRKQSRSKYGTKRPKEK.

Residues 1-28 (MPTINQLVRKGREKVKKKSKAPALEGNP) are disordered. Basic residues predominate over residues 9–20 (RKGREKVKKKSK). Position 89 is a 3-methylthioaspartic acid (aspartate 89). The tract at residues 104 to 125 (AAGVKDRKQSRSKYGTKRPKEK) is disordered. The segment covering 113–125 (SRSKYGTKRPKEK) has biased composition (basic residues).

The protein belongs to the universal ribosomal protein uS12 family. In terms of assembly, part of the 30S ribosomal subunit. Contacts proteins S8 and S17. May interact with IF1 in the 30S initiation complex.

In terms of biological role, with S4 and S5 plays an important role in translational accuracy. Functionally, interacts with and stabilizes bases of the 16S rRNA that are involved in tRNA selection in the A site and with the mRNA backbone. Located at the interface of the 30S and 50S subunits, it traverses the body of the 30S subunit contacting proteins on the other side and probably holding the rRNA structure together. The combined cluster of proteins S8, S12 and S17 appears to hold together the shoulder and platform of the 30S subunit. The protein is Small ribosomal subunit protein uS12 of Persephonella marina (strain DSM 14350 / EX-H1).